The sequence spans 296 residues: Sulfate adenylyltransferase subunit 2 (296 aa).

The protein belongs to the PAPS reductase family. CysD subfamily. As to quaternary structure, heterodimer composed of CysD, the smaller subunit, and CysN.

The catalysed reaction is sulfate + ATP + H(+) = adenosine 5'-phosphosulfate + diphosphate. The protein operates within sulfur metabolism; hydrogen sulfide biosynthesis; sulfite from sulfate: step 1/3. Functionally, with CysN forms the ATP sulfurylase (ATPS) that catalyzes the adenylation of sulfate producing adenosine 5'-phosphosulfate (APS) and diphosphate, the first enzymatic step in sulfur assimilation pathway. APS synthesis involves the formation of a high-energy phosphoric-sulfuric acid anhydride bond driven by GTP hydrolysis by CysN coupled to ATP hydrolysis by CysD. The polypeptide is Sulfate adenylyltransferase subunit 2 (Rhodospirillum rubrum (strain ATCC 11170 / ATH 1.1.1 / DSM 467 / LMG 4362 / NCIMB 8255 / S1)).